A 175-amino-acid chain; its full sequence is Colicin-B immunity protein (175 aa).

Helical transmembrane passes span 14–32 (ILYA…ILIL), 104–121 (CFWG…TLFY), and 149–168 (IYFT…LLVI).

It is found in the cell inner membrane. Functionally, this protein is able to protect a cell, which harbors the plasmid ColB encoding colicin B, against colicin B. The polypeptide is Colicin-B immunity protein (cbi) (Escherichia coli).